The chain runs to 155 residues: Small ribosomal subunit protein uS7 (155 aa).

The protein belongs to the universal ribosomal protein uS7 family. In terms of assembly, part of the 30S ribosomal subunit. Contacts proteins S9 and S11.

One of the primary rRNA binding proteins, it binds directly to 16S rRNA where it nucleates assembly of the head domain of the 30S subunit. Is located at the subunit interface close to the decoding center, probably blocks exit of the E-site tRNA. The sequence is that of Small ribosomal subunit protein uS7 from Corynebacterium aurimucosum (strain ATCC 700975 / DSM 44827 / CIP 107346 / CN-1) (Corynebacterium nigricans).